The chain runs to 215 residues: Transmembrane protein 267 (215 aa).

3 helical membrane-spanning segments follow: residues 77 to 97 (FCEV…HFFL), 114 to 134 (PLHC…LMQL), and 178 to 198 (YWLY…IMCL).

It is found in the membrane. The protein is Transmembrane protein 267 (tmem267) of Xenopus laevis (African clawed frog).